We begin with the raw amino-acid sequence, 464 residues long: UDP-N-acetylmuramate--L-alanine ligase (464 aa).

115–121 contacts ATP; that stretch reads GSHGKTT.

It belongs to the MurCDEF family.

Its subcellular location is the cytoplasm. It catalyses the reaction UDP-N-acetyl-alpha-D-muramate + L-alanine + ATP = UDP-N-acetyl-alpha-D-muramoyl-L-alanine + ADP + phosphate + H(+). Its pathway is cell wall biogenesis; peptidoglycan biosynthesis. Its function is as follows. Cell wall formation. The protein is UDP-N-acetylmuramate--L-alanine ligase of Pelagibacter ubique (strain HTCC1062).